The sequence spans 178 residues: Cysteine protease inhibitor 7 (178 aa).

Disulfide bonds link C41-C93 and C141-C147.

It belongs to the protease inhibitor I3 (leguminous Kunitz-type inhibitor) family.

It is found in the vacuole. In terms of biological role, inhibitor of cysteine proteases. May protect the plant by inhibiting proteases of invading organisms. This is Cysteine protease inhibitor 7 from Solanum tuberosum (Potato).